The primary structure comprises 859 residues: Ribose import ATP-binding protein RbsA 1 (859 aa).

A disordered region spans residues M1 to E351. A unknown region spans residues M1–A353. The segment covering G8 to V17 has biased composition (basic and acidic residues). The span at R28–R43 shows a compositional bias: basic residues. Composition is skewed to basic and acidic residues over residues R44 to A80, R89 to G129, and R137 to R167. Positions R168–P179 are enriched in basic residues. Basic and acidic residues-rich tracts occupy residues G193 to E214, R239 to V250, A263 to R281, D288 to G301, and D308 to V323. 2 consecutive ABC transporter domains span residues L358 to R594 and R607 to V851. G390–S397 is a binding site for ATP.

This sequence belongs to the ABC transporter superfamily. Ribose importer (TC 3.A.1.2.1) family. As to quaternary structure, the complex is composed of an ATP-binding protein (RbsA), two transmembrane proteins (RbsC) and a solute-binding protein (RbsB).

The protein localises to the cell inner membrane. The enzyme catalyses D-ribose(out) + ATP + H2O = D-ribose(in) + ADP + phosphate + H(+). Its function is as follows. Part of the ABC transporter complex RbsABC involved in ribose import. Responsible for energy coupling to the transport system. This Burkholderia pseudomallei (strain 1710b) protein is Ribose import ATP-binding protein RbsA 1.